The following is a 115-amino-acid chain: Non-specific lipid-transfer protein Cor a 8.0101 (115 aa).

The signal sequence occupies residues 1–23 (MGSLKLVCAVLLCMMVAAPVARA). 4 cysteine pairs are disulfide-bonded: Cys27/Cys74, Cys37/Cys51, Cys52/Cys97, and Cys72/Cys111.

It belongs to the plant LTP family. Monomer. As to expression, expressed in seed (at protein level). Expressed in seed.

Plant non-specific lipid-transfer proteins transfer phospholipids as well as galactolipids across membranes. May play a role in wax or cutin deposition in the cell walls of expanding epidermal cells and certain secretory tissues. This Corylus avellana (European hazel) protein is Non-specific lipid-transfer protein Cor a 8.0101.